The primary structure comprises 238 residues: MSNVNMDFEQAGELKIGQVGIATLRIRTLNVPRLIQEMSDRVTRAPKLFRRTAVILDFGELPHPPDLATAKALVEGLRAANVLPVAIAYGTNEIDLLSQQLGLPLLSKFRAHYERQEVAAPPPQSTPPISTGRIQHTTVRSGQQLYAEHCDLTILNTVGAGAEVIADGNIHIYGTLRGRAMAGARGNAEMRIFCRDFQAELIAIAGRYKVLDDIPTELRGKAVQVWLEQNQIKIAALD.

It belongs to the MinC family. As to quaternary structure, interacts with MinD and FtsZ.

In terms of biological role, cell division inhibitor that blocks the formation of polar Z ring septums. Rapidly oscillates between the poles of the cell to destabilize FtsZ filaments that have formed before they mature into polar Z rings. Prevents FtsZ polymerization. The polypeptide is Probable septum site-determining protein MinC (Xylella fastidiosa (strain M23)).